A 475-amino-acid chain; its full sequence is Cysteine--tRNA ligase (475 aa).

Cysteine 28 is a Zn(2+) binding site. Positions 30–40 match the 'HIGH' region motif; it reads PTVYDYAHIGN. The Zn(2+) site is built by cysteine 213, histidine 238, and glutamate 242. Residues 270–274 carry the 'KMSKS' region motif; the sequence is KMSKS. Position 273 (lysine 273) interacts with ATP.

It belongs to the class-I aminoacyl-tRNA synthetase family. In terms of assembly, monomer. It depends on Zn(2+) as a cofactor.

It localises to the cytoplasm. It carries out the reaction tRNA(Cys) + L-cysteine + ATP = L-cysteinyl-tRNA(Cys) + AMP + diphosphate. This Chlamydia muridarum (strain MoPn / Nigg) protein is Cysteine--tRNA ligase (cysS).